A 396-amino-acid polypeptide reads, in one-letter code: Probable sugar efflux transporter (396 aa).

Transmembrane regions (helical) follow at residues 15-35, 51-71, 84-104, 109-129, 137-157, 168-188, 209-229, 245-265, 273-293, 297-317, 333-353, and 365-385; these read VLIMACAGFIFNTTEFVPVAM, GLMMTVYAWTVLIMSLPAMLA, LFIIFIVGHILSVIAWNFWIL, MCIALAHSVFWSITASLVMRI, QALGMLAIGTALATILGLPIG, VTFGIIAVLALSIMFLIIRLL, PLLLWLYVTTAIVISAHFTAY, NFATAVLLVFGFSGIAASLLF, PTKFIVVSMSLLMFSLLLLLF, TIIAMFSLVFIWGIGISCIGL, VATAIYSGIFNAGIGAGALFG, and IGYTGAALGLIGFIIFITTHL.

This sequence belongs to the major facilitator superfamily. SotB (TC 2.A.1.2) family.

Its subcellular location is the cell inner membrane. Functionally, involved in the efflux of sugars. The physiological role may be the reduction of the intracellular concentration of toxic sugars or sugar metabolites. The sequence is that of Probable sugar efflux transporter from Haemophilus influenzae (strain ATCC 51907 / DSM 11121 / KW20 / Rd).